A 129-amino-acid polypeptide reads, in one-letter code: Small ribosomal subunit protein uS11 (129 aa).

Belongs to the universal ribosomal protein uS11 family. As to quaternary structure, part of the 30S ribosomal subunit. Interacts with proteins S7 and S18. Binds to IF-3.

Functionally, located on the platform of the 30S subunit, it bridges several disparate RNA helices of the 16S rRNA. Forms part of the Shine-Dalgarno cleft in the 70S ribosome. The chain is Small ribosomal subunit protein uS11 from Methylorubrum populi (strain ATCC BAA-705 / NCIMB 13946 / BJ001) (Methylobacterium populi).